The chain runs to 274 residues: Transmembrane protein 106B (274 aa).

A compositionally biased stretch (low complexity) spans 1–11; that stretch reads MGKSLSHLPLH. The tract at residues 1–20 is disordered; the sequence is MGKSLSHLPLHSSKEDAYDG. The N-myristoyl glycine moiety is linked to residue glycine 2. At 2-96 the chain is on the cytoplasmic side; the sequence is GKSLSHLPLH…QRLRPRRTKL (95 aa). At serine 33 the chain carries Phosphoserine. A helical membrane pass occupies residues 97–117; the sequence is YVMASVFVCLLLSGLAVFFLF. Residues 118 to 274 lie on the Lumenal side of the membrane; it reads PRSIDVKYIG…EYLNVLQPQQ (157 aa). N-linked (GlcNAc...) asparagine glycans are attached at residues asparagine 145, asparagine 151, asparagine 164, and asparagine 183. Cysteine 214 and cysteine 253 are oxidised to a cystine. The N-linked (GlcNAc...) asparagine glycan is linked to asparagine 256.

This sequence belongs to the TMEM106 family. As to quaternary structure, can form homomers. Interacts (via N-terminus) with MAP6 (via C-terminus). Interacts (via C-terminus) with the vacuolar-type ATPase subunit ATP6AP1. Interacts (via N-terminus) with AP2M1 and CLTC. Interacts with TMEM106C. (Microbial infection) Interacts with SARS coronavirus-2/SARS-CoV-2 spike protein (via RBD domain). In terms of tissue distribution, expressed in the brain, including in the frontal cortex (at protein level). Expressed in lung epithelial cells.

It localises to the late endosome membrane. The protein localises to the lysosome membrane. Its subcellular location is the cell membrane. In terms of biological role, in neurons, involved in the transport of late endosomes/lysosomes. May be involved in dendrite morphogenesis and maintenance by regulating lysosomal trafficking. May act as a molecular brake for retrograde transport of late endosomes/lysosomes, possibly via its interaction with MAP6. In motoneurons, may mediate the axonal transport of lysosomes and axonal sorting at the initial segment. It remains unclear whether TMEM106B affects the transport of moving lysosomes in the anterograde or retrograde direction in neurites and whether it is important in the sorting of lysosomes in axons or in dendrites. In neurons, may also play a role in the regulation of lysosomal size and responsiveness to stress. Required for proper lysosomal acidification. Functionally, (Microbial infection) Plays a role in human coronavirus SARS-CoV-2 infection, but not in common cold coronaviruses HCoV-229E and HCoV-OC43 infections. Involved in ACE2-independent SARS-CoV-2 cell entry. Required for post-endocytic stage of virus entry, facilitates spike-mediated membrane fusion. Virus attachment and endocytosis can also be mediated by other cell surface receptors. In Homo sapiens (Human), this protein is Transmembrane protein 106B.